The chain runs to 215 residues: UPF0056 membrane protein YhcE (215 aa).

6 helical membrane passes run 14–34, 54–74, 81–101, 120–140, 147–167, and 189–209; these read FFIG…FISM, VAII…LFGI, IAGG…KLGE, VVPL…TIVW, ISYL…CWGL, and IMGL…IKGI.

The protein belongs to the UPF0056 (MarC) family.

It is found in the cell membrane. The sequence is that of UPF0056 membrane protein YhcE (ychE) from Escherichia coli (strain K12).